We begin with the raw amino-acid sequence, 421 residues long: Protein HOMOLOG OF MAMMALIAN LYST-INTERACTING PROTEIN 5 (421 aa).

Serine 2 is subject to N-acetylserine. The interval 146-374 is disordered; it reads IKEGRKPTPG…KYHYDSSYQP (229 aa). The span at 165 to 185 shows a compositional bias: polar residues; sequence SIPSSGPSGSYDHSASDTNTT. A compositionally biased stretch (basic and acidic residues) spans 188 to 207; sequence HRTELDPPHDSNDDSSHHQF. Residues 245-258 show a composition bias toward pro residues; that stretch reads LPPPTGPSDSPYPH. A compositionally biased stretch (polar residues) spans 278-293; that stretch reads NYSSHEPSPNSLPNFQ. Composition is skewed to low complexity over residues 294 to 308 and 317 to 337; these read SYPSFSESSLPSTSP and PEPYYSSPHSAPAPSSTSFSS.

The protein belongs to the VTA1 family. In terms of assembly, homodimer. Interacts with SKD1/VPS4, VPS60-1, CHMP1A and CHMP1B. Binds to PROS/At4g24370. Interacts with MPK6 and MPK3. Phosphorylated by activated MPK6 and MPK3, this activation is required to trigger multivesicular bodies (MVBs) trafficking upon plant infection.

It is found in the cytoplasm. It localises to the endosome membrane. The protein localises to the nucleus. The protein resides in the endosome. Its subcellular location is the multivesicular body. Involved in the endosomal multivesicular bodies (MVB) pathway. MVBs contain intraluminal vesicles (ILVs) that are generated by invagination and scission from the limiting membrane of the endosome and are delivered to lysosomes enabling degradation of membrane proteins. Thought to be a cofactor of SKD1/VPS4, which catalyzes the disassembly of membrane-associated ESCRT-III. Target of pathogen-responsive mitogen-activated protein kinases (MPKs) that plays a critical role in plant basal resistance to Pseudomonas syringae in a SKD1-dependent manner by promoting multivesicular bodies (MVBs) trafficking upon plant infection. This Arabidopsis thaliana (Mouse-ear cress) protein is Protein HOMOLOG OF MAMMALIAN LYST-INTERACTING PROTEIN 5.